A 106-amino-acid polypeptide reads, in one-letter code: V-type proton ATPase subunit G2 (106 aa).

Met1 carries the N-acetylmethionine modification. Residues 31 to 67 (LKQAKEEAETEVAEHKTSTEQGFQRKLEATSGDSGAN) are disordered. The segment covering 33–58 (QAKEEAETEVAEHKTSTEQGFQRKLE) has biased composition (basic and acidic residues).

It belongs to the V-ATPase G subunit family. V-ATPase is a heteromultimeric enzyme composed of a peripheral catalytic V1 complex (components A to H) attached to an integral membrane V0 proton pore complex (components: a, c, c'', d and e).

The protein resides in the vacuole membrane. Catalytic subunit of the peripheral V1 complex of vacuolar ATPase (V-ATPase). V-ATPase is responsible for acidifying a variety of intracellular compartments in eukaryotic cells. The chain is V-type proton ATPase subunit G2 (VHA-G2) from Arabidopsis thaliana (Mouse-ear cress).